Here is a 287-residue protein sequence, read N- to C-terminus: Acetyl-coenzyme A carboxylase carboxyl transferase subunit beta (287 aa).

A CoA carboxyltransferase N-terminal domain is found at 25-287 (VWTKCSACEQ…KMLNTHVIEE (263 aa)). 4 residues coordinate Zn(2+): Cys-29, Cys-32, Cys-48, and Cys-51. The C4-type zinc-finger motif lies at 29–51 (CSACEQVLYRAELERNLEVCPKC).

Belongs to the AccD/PCCB family. As to quaternary structure, acetyl-CoA carboxylase is a heterohexamer composed of biotin carboxyl carrier protein (AccB), biotin carboxylase (AccC) and two subunits each of ACCase subunit alpha (AccA) and ACCase subunit beta (AccD). Zn(2+) is required as a cofactor.

It localises to the cytoplasm. The catalysed reaction is N(6)-carboxybiotinyl-L-lysyl-[protein] + acetyl-CoA = N(6)-biotinyl-L-lysyl-[protein] + malonyl-CoA. The protein operates within lipid metabolism; malonyl-CoA biosynthesis; malonyl-CoA from acetyl-CoA: step 1/1. Its function is as follows. Component of the acetyl coenzyme A carboxylase (ACC) complex. Biotin carboxylase (BC) catalyzes the carboxylation of biotin on its carrier protein (BCCP) and then the CO(2) group is transferred by the transcarboxylase to acetyl-CoA to form malonyl-CoA. This is Acetyl-coenzyme A carboxylase carboxyl transferase subunit beta from Aeromonas salmonicida (strain A449).